We begin with the raw amino-acid sequence, 292 residues long: 5,10-methylenetetrahydrofolate reductase (292 aa).

Glu26 acts as the Proton donor/acceptor in catalysis. Residue Thr57 coordinates NADH. The FAD site is built by Tyr58, Ala60, His86, Arg116, Gly117, Asp118, Ala130, Tyr150, His154, Ala157, Asp163, Asn166, Arg169, and Lys170. Asp118 serves as a coordination point for (6S)-5-methyl-5,6,7,8-tetrahydrofolate. Position 181 (Gln181) interacts with NADH. The (6S)-5-methyl-5,6,7,8-tetrahydrofolate site is built by Gln181, Gln217, and Arg277.

It belongs to the methylenetetrahydrofolate reductase family. FAD is required as a cofactor.

It carries out the reaction (6S)-5-methyl-5,6,7,8-tetrahydrofolate + NAD(+) = (6R)-5,10-methylene-5,6,7,8-tetrahydrofolate + NADH + H(+). It functions in the pathway one-carbon metabolism; tetrahydrofolate interconversion. Its pathway is amino-acid biosynthesis; L-methionine biosynthesis via de novo pathway. Functionally, catalyzes the NADH-dependent reduction of 5,10-methylenetetrahydrofolate to 5-methyltetrahydrofolate. Is required to provide the methyl group necessary for methionine synthetase to convert homocysteine to methionine; the methyl group is given by 5-methyltetrahydrofolate. This Neisseria meningitidis serogroup B (strain ATCC BAA-335 / MC58) protein is 5,10-methylenetetrahydrofolate reductase (metF).